Here is a 228-residue protein sequence, read N- to C-terminus: uncharacterized protein (228 aa).

A signal peptide spans 1–16 (MILLLLALISATTAFQ). Residues 206 to 225 (LFQTLFFVTLSFLVGSAFAL) traverse the membrane as a helical segment.

To A.fulgidus AF_1225.

It is found in the membrane. This is an uncharacterized protein from Archaeoglobus fulgidus (strain ATCC 49558 / DSM 4304 / JCM 9628 / NBRC 100126 / VC-16).